Here is a 718-residue protein sequence, read N- to C-terminus: Mitochondrial potassium channel ATP-binding subunit (718 aa).

Residues 1-25 (MLVHLFRVGIRGGPFPGRLLPPLRF) constitute a mitochondrion transit peptide. The next 3 helical transmembrane spans lie at 128 to 148 (LLVL…NVQI), 179 to 199 (THLL…LVLL), and 279 to 299 (LLLM…GSGL). The ABC transmembrane type-1 domain occupies 133–420 (VAVVLALGAA…LSVLFGQVVR (288 aa)). The region spanning 455–692 (VTFQNVCFSY…GGLYAELIRR (238 aa)) is the ABC transporter domain. Residue 490–497 (GQSGGGKT) participates in ATP binding. Residues 697 to 718 (APRTAAPLPKKPEGPRNHQHKS) are disordered.

The protein belongs to the ABC transporter superfamily. ABCB family. Multidrug resistance exporter (TC 3.A.1.201) subfamily. As to quaternary structure, the mitochondrial potassium channel (mitoK(ATP)) is composed of 4 subunits of CCDC51/MITOK and 4 subunits of ABCB8/MITOSUR. Physically interacts with PAAT. Interacts with Neuropilin-1 (NRP1) in mitochondria.

The protein resides in the mitochondrion inner membrane. Its activity is regulated as follows. Channel activity inhibited by ATP via ABCB8/MITOSUR subunit. ATP-binding subunit of the mitochondrial ATP-gated potassium channel (mitoK(ATP)). Together with pore-forming subunit CCDC51/MITOK of the mitoK(ATP) channel, mediates ATP-dependent potassium currents across the mitochondrial inner membrane. An increase in ATP intracellular levels closes the channel, inhibiting K(+) transport, whereas a decrease in ATP levels enhances K(+) uptake in the mitochondrial matrix. Plays a role in mitochondrial iron transport. Required for maintenance of normal cardiac function, possibly by influencing mitochondrial iron export and regulating the maturation of cytosolic iron sulfur cluster-containing enzymes. In Pongo abelii (Sumatran orangutan), this protein is Mitochondrial potassium channel ATP-binding subunit (ABCB8).